The sequence spans 204 residues: Somatotropin (204 aa).

An N-terminal signal peptide occupies residues 1–17 (MNSVVLLLSVVCLGVSS). At glutamine 18 the chain carries Pyrrolidone carboxylic acid. Histidine 36 provides a ligand contact to Zn(2+). Cysteine 69 and cysteine 177 form a disulfide bridge. Position 186 (glutamate 186) interacts with Zn(2+). A disulfide bridge connects residues cysteine 194 and cysteine 202.

The protein belongs to the somatotropin/prolactin family.

It localises to the secreted. In terms of biological role, growth hormone plays an important role in growth control and involved in the regulation of several anabolic processes. The protein is Somatotropin (gh) of Oreochromis niloticus (Nile tilapia).